The chain runs to 583 residues: Pentatricopeptide repeat-containing protein At2g33760 (583 aa).

9 PPR repeats span residues 71-105 (DDFL…NVSP), 106-140 (SNYT…GFGL), 141-171 (DTYV…MPEK), 172-206 (SIVA…GFEP), 207-241 (DSAT…GLDL), 242-276 (NVKL…NVAA), 277-303 (WTAM…MEDD), 309-339 (NNVT…MTKS), and 345-379 (GVEH…GKAT). The type E motif stretch occupies residues 383–458 (LWTAMLGACK…QVGYSVIEVE (76 aa)). The segment at 459–489 (NKTYMFSMGDESHQETGEIYRYLETLISRCK) is type E(+) motif. The tract at residues 490 to 583 (EIGYAPVSEE…NGSCSCLDYW (94 aa)) is type DYW motif.

The protein belongs to the PPR family. PCMP-H subfamily.

The polypeptide is Pentatricopeptide repeat-containing protein At2g33760 (PCMP-H6) (Arabidopsis thaliana (Mouse-ear cress)).